An 84-amino-acid chain; its full sequence is CDC42 small effector protein 2-A (84 aa).

S-palmitoyl cysteine attachment occurs at residues cysteine 10 and cysteine 11. The CRIB domain occupies 29–42 (IGEPTNFVHTAHVG).

This sequence belongs to the CDC42SE/SPEC family.

It localises to the cytoplasm. The protein resides in the cytoskeleton. Its subcellular location is the cell membrane. In terms of biological role, probably involved in the organization of the actin cytoskeleton by acting downstream of CDC42, inducing actin filament assembly. The chain is CDC42 small effector protein 2-A (cdc42se2-a) from Xenopus laevis (African clawed frog).